Here is a 395-residue protein sequence, read N- to C-terminus: Phosphopentomutase (395 aa).

The Mn(2+) site is built by aspartate 14, aspartate 289, histidine 294, aspartate 330, histidine 331, and histidine 342.

The protein belongs to the phosphopentomutase family. The cofactor is Mn(2+).

It is found in the cytoplasm. The enzyme catalyses 2-deoxy-alpha-D-ribose 1-phosphate = 2-deoxy-D-ribose 5-phosphate. It catalyses the reaction alpha-D-ribose 1-phosphate = D-ribose 5-phosphate. It participates in carbohydrate degradation; 2-deoxy-D-ribose 1-phosphate degradation; D-glyceraldehyde 3-phosphate and acetaldehyde from 2-deoxy-alpha-D-ribose 1-phosphate: step 1/2. In terms of biological role, isomerase that catalyzes the conversion of deoxy-ribose 1-phosphate (dRib-1-P) and ribose 1-phosphate (Rib-1-P) to deoxy-ribose 5-phosphate (dRib-5-P) and ribose 5-phosphate (Rib-5-P), respectively. This is Phosphopentomutase from Mycoplasmopsis pulmonis (strain UAB CTIP) (Mycoplasma pulmonis).